Consider the following 377-residue polypeptide: O-phospho-L-seryl-tRNA:Cys-tRNA synthase (377 aa).

Pyridoxal 5'-phosphate contacts are provided by residues 83-84 (AR), Asn-188, and 211-213 (SGH). Lys-214 is subject to N6-(pyridoxal phosphate)lysine.

The protein belongs to the SepCysS family. As to quaternary structure, homodimer. Interacts with SepRS. The cofactor is pyridoxal 5'-phosphate.

It carries out the reaction O-phospho-L-seryl-tRNA(Cys) + hydrogen sulfide + H(+) = L-cysteinyl-tRNA(Cys) + phosphate. Its function is as follows. Converts O-phospho-L-seryl-tRNA(Cys) (Sep-tRNA(Cys)) to L-cysteinyl-tRNA(Cys) (Cys-tRNA(Cys)). The sequence is that of O-phospho-L-seryl-tRNA:Cys-tRNA synthase from Methanothermobacter thermautotrophicus (strain ATCC 29096 / DSM 1053 / JCM 10044 / NBRC 100330 / Delta H) (Methanobacterium thermoautotrophicum).